We begin with the raw amino-acid sequence, 339 residues long: UDP-N-acetylenolpyruvoylglucosamine reductase (339 aa).

One can recognise an FAD-binding PCMH-type domain in the interval 19–189; it reads VDVRAQLFAE…LRVRFALNRV (171 aa). Arg166 is an active-site residue. Ser239 functions as the Proton donor in the catalytic mechanism. Glu335 is an active-site residue.

Belongs to the MurB family. Requires FAD as cofactor.

The protein localises to the cytoplasm. It catalyses the reaction UDP-N-acetyl-alpha-D-muramate + NADP(+) = UDP-N-acetyl-3-O-(1-carboxyvinyl)-alpha-D-glucosamine + NADPH + H(+). The protein operates within cell wall biogenesis; peptidoglycan biosynthesis. Cell wall formation. In Pseudomonas fluorescens (strain Pf0-1), this protein is UDP-N-acetylenolpyruvoylglucosamine reductase.